The chain runs to 556 residues: Formate--tetrahydrofolate ligase (556 aa).

An ATP-binding site is contributed by 65–72 (TPAGEGKS).

The protein belongs to the formate--tetrahydrofolate ligase family.

It carries out the reaction (6S)-5,6,7,8-tetrahydrofolate + formate + ATP = (6R)-10-formyltetrahydrofolate + ADP + phosphate. The protein operates within one-carbon metabolism; tetrahydrofolate interconversion. In Streptococcus pneumoniae serotype 19F (strain G54), this protein is Formate--tetrahydrofolate ligase.